Reading from the N-terminus, the 425-residue chain is Serine--tRNA ligase (425 aa).

Position 232–234 (232–234 (TSE)) interacts with L-serine. ATP-binding positions include 263 to 265 (RRE) and valine 279. Glutamate 286 lines the L-serine pocket. 350–353 (EAVS) contributes to the ATP binding site. An L-serine-binding site is contributed by threonine 387.

Belongs to the class-II aminoacyl-tRNA synthetase family. Type-1 seryl-tRNA synthetase subfamily. In terms of assembly, homodimer. The tRNA molecule binds across the dimer.

Its subcellular location is the cytoplasm. The enzyme catalyses tRNA(Ser) + L-serine + ATP = L-seryl-tRNA(Ser) + AMP + diphosphate + H(+). It catalyses the reaction tRNA(Sec) + L-serine + ATP = L-seryl-tRNA(Sec) + AMP + diphosphate + H(+). It participates in aminoacyl-tRNA biosynthesis; selenocysteinyl-tRNA(Sec) biosynthesis; L-seryl-tRNA(Sec) from L-serine and tRNA(Sec): step 1/1. Functionally, catalyzes the attachment of serine to tRNA(Ser). Is also able to aminoacylate tRNA(Sec) with serine, to form the misacylated tRNA L-seryl-tRNA(Sec), which will be further converted into selenocysteinyl-tRNA(Sec). The sequence is that of Serine--tRNA ligase from Methanoculleus marisnigri (strain ATCC 35101 / DSM 1498 / JR1).